A 356-amino-acid chain; its full sequence is D-alanine--D-alanine ligase (356 aa).

An ATP-grasp domain is found at 134–339 (KQLFAHRGLP…YSDLIKKLIE (206 aa)). 167-222 (HDKLEYPVFVKPANLGSSVGISKCNNEEELKNGIEEAFQFDRKLVIEQGIEAREIE) is a binding site for ATP. Residues D293, E306, and N308 each contribute to the Mg(2+) site.

The protein belongs to the D-alanine--D-alanine ligase family. Mg(2+) is required as a cofactor. Mn(2+) serves as cofactor.

Its subcellular location is the cytoplasm. The catalysed reaction is 2 D-alanine + ATP = D-alanyl-D-alanine + ADP + phosphate + H(+). It functions in the pathway cell wall biogenesis; peptidoglycan biosynthesis. Functionally, cell wall formation. The protein is D-alanine--D-alanine ligase of Staphylococcus saprophyticus subsp. saprophyticus (strain ATCC 15305 / DSM 20229 / NCIMB 8711 / NCTC 7292 / S-41).